A 431-amino-acid polypeptide reads, in one-letter code: Zeaxanthin glucosyltransferase (431 aa).

This sequence belongs to the UDP-glycosyltransferase family.

The enzyme catalyses all-trans-zeaxanthin + 2 UDP-alpha-D-glucose = zeaxanthin bis(beta-D-glucoside) + 2 UDP + 2 H(+). The protein operates within carotenoid biosynthesis; zeaxanthin diglucoside biosynthesis. Its function is as follows. Catalyzes the glycosylation reaction which converts zeaxanthin to zeaxanthin bis(beta-D-glucoside). The reaction proceeds in two steps with the monoglucoside as an intermediate. The chain is Zeaxanthin glucosyltransferase (crtX) from Pantoea ananas (Erwinia uredovora).